The following is an 83-amino-acid chain: Cytochrome c-554(548) (83 aa).

4 residues coordinate heme c: C14, C17, H18, and M63.

Homodimer. Binds 1 heme c group covalently per subunit.

The polypeptide is Cytochrome c-554(548) (Halomonas halodenitrificans (strain ATCC 12084 / NCIMB 8669) (Paracoccus halodenitrificans)).